The following is a 428-amino-acid chain: D-amino acid dehydrogenase (428 aa).

3 to 17 serves as a coordination point for FAD; that stretch reads VVILGSGVVGVASAY.

This sequence belongs to the DadA oxidoreductase family. FAD serves as cofactor.

It catalyses the reaction a D-alpha-amino acid + A + H2O = a 2-oxocarboxylate + AH2 + NH4(+). It functions in the pathway amino-acid degradation; D-alanine degradation; NH(3) and pyruvate from D-alanine: step 1/1. In terms of biological role, oxidative deamination of D-amino acids. This chain is D-amino acid dehydrogenase, found in Burkholderia lata (strain ATCC 17760 / DSM 23089 / LMG 22485 / NCIMB 9086 / R18194 / 383).